An 80-amino-acid polypeptide reads, in one-letter code: Large ribosomal subunit protein bL31 (80 aa).

Zn(2+) contacts are provided by Cys16, Cys18, Cys38, and Cys41.

This sequence belongs to the bacterial ribosomal protein bL31 family. Type A subfamily. In terms of assembly, part of the 50S ribosomal subunit. It depends on Zn(2+) as a cofactor.

Functionally, binds the 23S rRNA. The chain is Large ribosomal subunit protein bL31 from Rhodococcus jostii (strain RHA1).